Here is a 146-residue protein sequence, read N- to C-terminus: Large-conductance mechanosensitive channel (146 aa).

2 helical membrane passes run 12-32 (AFAM…GGAF) and 83-103 (GNFL…FLFI).

The protein belongs to the MscL family. Homopentamer.

Its subcellular location is the cell inner membrane. Functionally, channel that opens in response to stretch forces in the membrane lipid bilayer. May participate in the regulation of osmotic pressure changes within the cell. This is Large-conductance mechanosensitive channel from Phocaeicola vulgatus (strain ATCC 8482 / DSM 1447 / JCM 5826 / CCUG 4940 / NBRC 14291 / NCTC 11154) (Bacteroides vulgatus).